We begin with the raw amino-acid sequence, 130 residues long: DUF35 domain-containing scaffold protein (130 aa).

C20, C23, C34, and C37 together coordinate Zn(2+).

It belongs to the scaffold protein DUF35 family. In terms of assembly, interacts with acetoacetyl-CoA thiolase and HMG-CoA synthase (HMGCS) that catalyzes the first and second step in the mevalonate pathway, respectively.

Its function is as follows. Functions as a scaffold to connect the acetoacetyl-CoA thiolase and HMG-CoA synthase (HMGCS) dimers in the channeling thiolase/HMGCS complex, which allows for efficient coupling of the endergonic thiolase reaction with the exergonic HMGCS reaction. This chain is DUF35 domain-containing scaffold protein, found in Methanothermococcus thermolithotrophicus (Methanococcus thermolithotrophicus).